Consider the following 448-residue polypeptide: Exodeoxyribonuclease 7 large subunit (448 aa).

Belongs to the XseA family. In terms of assembly, heterooligomer composed of large and small subunits.

The protein resides in the cytoplasm. The enzyme catalyses Exonucleolytic cleavage in either 5'- to 3'- or 3'- to 5'-direction to yield nucleoside 5'-phosphates.. Functionally, bidirectionally degrades single-stranded DNA into large acid-insoluble oligonucleotides, which are then degraded further into small acid-soluble oligonucleotides. This Shewanella baltica (strain OS185) protein is Exodeoxyribonuclease 7 large subunit.